The chain runs to 150 residues: Viral late gene transcription factor 2 (150 aa).

Belongs to the orthopoxvirus VLTF-2/OPG126 family. In terms of assembly, interacts with itself. Interacts with the late transcription factors VLTF-1/OPG093.

In terms of biological role, acts with RNA polymerase to initiate transcription from late gene promoters. This is Viral late gene transcription factor 2 (OPG126) from Vaccinia virus (strain Copenhagen) (VACV).